A 485-amino-acid chain; its full sequence is 1-aminocyclopropane-1-carboxylate synthase 2 (485 aa).

Substrate contacts are provided by Glu-55 and Tyr-92. Lys-278 carries the post-translational modification N6-(pyridoxal phosphate)lysine. Ser-460 is modified (phosphoserine).

It belongs to the class-I pyridoxal-phosphate-dependent aminotransferase family. In terms of assembly, homodimer and heterodimer. In vivo, the relevance of heterodimerization with other ACS enzymes is however unsure. Pyridoxal 5'-phosphate is required as a cofactor. Phosphorylated on Ser 460; phosphorylation may regulate its turnover. Post-translationally, may be processed at its C-terminus.

The catalysed reaction is S-adenosyl-L-methionine = 1-aminocyclopropane-1-carboxylate + S-methyl-5'-thioadenosine + H(+). The protein operates within alkene biosynthesis; ethylene biosynthesis via S-adenosyl-L-methionine; ethylene from S-adenosyl-L-methionine: step 1/2. In terms of biological role, 1-aminocyclopropane-1-carboxylate synthase (ACS) enzymes catalyze the conversion of S-adenosyl-L-methionine (SAM) into 1-aminocyclopropane-1-carboxylate (ACC), a direct precursor of ethylene. This Solanum lycopersicum (Tomato) protein is 1-aminocyclopropane-1-carboxylate synthase 2 (ACS2).